Consider the following 446-residue polypeptide: GTPase Der (446 aa).

EngA-type G domains follow at residues 3-168 (PVIA…YAGQ) and 181-354 (IKIA…KAAM). GTP-binding positions include 9-16 (GRPNVGKS), 57-61 (DTGGF), 120-123 (NKAE), 187-194 (GRPNVGKS), 234-238 (DTAGL), and 299-302 (NKWD). Residues 355-439 (SKLPTPKLTR…PLRIEFRSST (85 aa)) enclose the KH-like domain.

The protein belongs to the TRAFAC class TrmE-Era-EngA-EngB-Septin-like GTPase superfamily. EngA (Der) GTPase family. As to quaternary structure, associates with the 50S ribosomal subunit.

In terms of biological role, GTPase that plays an essential role in the late steps of ribosome biogenesis. This is GTPase Der from Paraburkholderia phymatum (strain DSM 17167 / CIP 108236 / LMG 21445 / STM815) (Burkholderia phymatum).